A 433-amino-acid chain; its full sequence is Serine/threonine-protein phosphatase 2A activator 2 (433 aa).

Over residues 1–10 (MTSQAPPQPA) the composition is skewed to pro residues. Disordered regions lie at residues 1–67 (MTSQ…NWTF) and 367–400 (SMSE…GTGW). Residues 11-23 (SSPGVAAPAAASS) show a composition bias toward low complexity. Pro residues predominate over residues 45-59 (NPTPIPETPALPTPP). Positions 367-382 (SMSEDTGAGDEADVED) are enriched in acidic residues. Basic and acidic residues predominate over residues 383 to 396 (DPHAGHDHTGKAHD).

Belongs to the PTPA-type PPIase family.

It is found in the cytoplasm. The catalysed reaction is [protein]-peptidylproline (omega=180) = [protein]-peptidylproline (omega=0). PPIases accelerate the folding of proteins. It catalyzes the cis-trans isomerization of proline imidic peptide bonds in oligopeptides. Acts as a regulatory subunit for PP2A-like phosphatases modulating their activity or substrate specificity, probably by inducing a conformational change in the catalytic subunit, a direct target of the PPIase. Can reactivate inactive phosphatase PP2A-phosphatase methylesterase complexes (PP2Ai) in presence of ATP and Mg(2+) by dissociating the inactive form from the complex. This is Serine/threonine-protein phosphatase 2A activator 2 (RRD2) from Gibberella zeae (strain ATCC MYA-4620 / CBS 123657 / FGSC 9075 / NRRL 31084 / PH-1) (Wheat head blight fungus).